The primary structure comprises 321 residues: Protoheme IX farnesyltransferase (321 aa).

The next 10 membrane-spanning stretches (helical) occupy residues 28–48 (VMSL…DPVH), 49–69 (PIVG…SGAL), 94–114 (VMPN…VFTL), 116–136 (IVAN…YVVI), 149–169 (IVIG…AATG), 176–196 (FILF…LALG), 222–242 (ILLY…LGFA), 247–267 (GMLS…VYIV), 277–297 (AKAL…EIVV), and 300–320 (LVPI…PGFF).

This sequence belongs to the UbiA prenyltransferase family. Protoheme IX farnesyltransferase subfamily.

Its subcellular location is the cell inner membrane. It catalyses the reaction heme b + (2E,6E)-farnesyl diphosphate + H2O = Fe(II)-heme o + diphosphate. The protein operates within porphyrin-containing compound metabolism; heme O biosynthesis; heme O from protoheme: step 1/1. Its function is as follows. Converts heme B (protoheme IX) to heme O by substitution of the vinyl group on carbon 2 of heme B porphyrin ring with a hydroxyethyl farnesyl side group. The protein is Protoheme IX farnesyltransferase of Beijerinckia indica subsp. indica (strain ATCC 9039 / DSM 1715 / NCIMB 8712).